The chain runs to 263 residues: Small ribosomal subunit protein eS4, X isoform (263 aa).

Residues 42-104 (LPLIIFLRNR…TGEHFRLVYD (63 aa)) enclose the S4 RNA-binding domain. A Glycyl lysine isopeptide (Lys-Gly) (interchain with G-Cter in SUMO2) cross-link involves residue Lys-230. N6-acetyllysine is present on Lys-233.

It belongs to the eukaryotic ribosomal protein eS4 family. Component of the small ribosomal subunit. Part of the small subunit (SSU) processome, composed of more than 70 proteins and the RNA chaperone small nucleolar RNA (snoRNA) U3. Identified in a IGF2BP1-dependent mRNP granule complex containing untranslated mRNAs.

It localises to the cytoplasm. The protein resides in the nucleus. The protein localises to the nucleolus. In terms of biological role, component of the small ribosomal subunit. The ribosome is a large ribonucleoprotein complex responsible for the synthesis of proteins in the cell. Part of the small subunit (SSU) processome, first precursor of the small eukaryotic ribosomal subunit. During the assembly of the SSU processome in the nucleolus, many ribosome biogenesis factors, an RNA chaperone and ribosomal proteins associate with the nascent pre-rRNA and work in concert to generate RNA folding, modifications, rearrangements and cleavage as well as targeted degradation of pre-ribosomal RNA by the RNA exosome. The sequence is that of Small ribosomal subunit protein eS4, X isoform (RPS4X) from Monodelphis domestica (Gray short-tailed opossum).